Consider the following 565-residue polypeptide: Adenine deaminase (565 aa).

The protein belongs to the metallo-dependent hydrolases superfamily. Adenine deaminase family. Requires Mn(2+) as cofactor.

It catalyses the reaction adenine + H2O + H(+) = hypoxanthine + NH4(+). This Cereibacter sphaeroides (strain KD131 / KCTC 12085) (Rhodobacter sphaeroides) protein is Adenine deaminase.